An 80-amino-acid chain; its full sequence is EMBRYO SURROUNDING FACTOR 1-like protein 1 (80 aa).

The signal sequence occupies residues Met1–Cys22. 4 disulfides stabilise this stretch: Cys38–Cys52, Cys43–Cys78, Cys50–Cys74, and Cys53–Cys64.

Belongs to the MEG family. In terms of tissue distribution, expressed in leaves.

This Arabidopsis thaliana (Mouse-ear cress) protein is EMBRYO SURROUNDING FACTOR 1-like protein 1 (ESFL1).